A 376-amino-acid chain; its full sequence is Small ribosomal subunit protein uS11m (376 aa).

The protein belongs to the universal ribosomal protein uS11 family. In terms of assembly, component of the mitochondrial small ribosomal subunit (mt-SSU). Mature N.crassa 74S mitochondrial ribosomes consist of a small (37S) and a large (54S) subunit. The 37S small subunit contains a 16S ribosomal RNA (16S mt-rRNA) and 32 different proteins. The 54S large subunit contains a 23S rRNA (23S mt-rRNA) and 42 different proteins.

It is found in the mitochondrion. Its function is as follows. Component of the mitochondrial ribosome (mitoribosome), a dedicated translation machinery responsible for the synthesis of mitochondrial genome-encoded proteins, including at least some of the essential transmembrane subunits of the mitochondrial respiratory chain. The mitoribosomes are attached to the mitochondrial inner membrane and translation products are cotranslationally integrated into the membrane. This Neurospora crassa (strain ATCC 24698 / 74-OR23-1A / CBS 708.71 / DSM 1257 / FGSC 987) protein is Small ribosomal subunit protein uS11m (mrps18).